A 205-amino-acid chain; its full sequence is ATP phosphoribosyltransferase (205 aa).

The protein belongs to the ATP phosphoribosyltransferase family. Short subfamily. Heteromultimer composed of HisG and HisZ subunits.

It localises to the cytoplasm. It carries out the reaction 1-(5-phospho-beta-D-ribosyl)-ATP + diphosphate = 5-phospho-alpha-D-ribose 1-diphosphate + ATP. Its pathway is amino-acid biosynthesis; L-histidine biosynthesis; L-histidine from 5-phospho-alpha-D-ribose 1-diphosphate: step 1/9. Catalyzes the condensation of ATP and 5-phosphoribose 1-diphosphate to form N'-(5'-phosphoribosyl)-ATP (PR-ATP). Has a crucial role in the pathway because the rate of histidine biosynthesis seems to be controlled primarily by regulation of HisG enzymatic activity. This is ATP phosphoribosyltransferase from Staphylococcus carnosus (strain TM300).